Reading from the N-terminus, the 128-residue chain is Holo-[acyl-carrier-protein] synthase (128 aa).

Mg(2+)-binding residues include Asp8 and Glu58.

It belongs to the P-Pant transferase superfamily. AcpS family. The cofactor is Mg(2+).

The protein localises to the cytoplasm. It catalyses the reaction apo-[ACP] + CoA = holo-[ACP] + adenosine 3',5'-bisphosphate + H(+). Its function is as follows. Transfers the 4'-phosphopantetheine moiety from coenzyme A to a Ser of acyl-carrier-protein. This Alkalilimnicola ehrlichii (strain ATCC BAA-1101 / DSM 17681 / MLHE-1) protein is Holo-[acyl-carrier-protein] synthase.